Reading from the N-terminus, the 607-residue chain is Branchpoint-bridging protein (607 aa).

Polar residues-rich tracts occupy residues 1-15 (MSWRNQGITGSNNIP) and 35-45 (VTPSAPSSVTN). Disordered stretches follow at residues 1–92 (MSWR…TENK) and 134–155 (VPADGDRSPSPAPQYDNHGRRV). The span at 46–76 (GDRDRDRDGPVYSNDRDVKRGRSPERSEDGP) shows a compositional bias: basic and acidic residues. A KH domain is found at 201-281 (YVPVNDYPEI…EKVNKAKKLI (81 aa)). 2 CCHC-type zinc fingers span residues 319–336 (QACQNCGQIGHRKYDCPE) and 344–361 (IICRVCGNAGHMARDCPD). Disordered stretches follow at residues 363–390 (QRGASWRNDGPGAGRTAGRIGSSGGGDA) and 407–607 (AAPA…PPGA). Residues 373–389 (PGAGRTAGRIGSSGGGD) show a composition bias toward gly residues. The segment covering 472–500 (ARDRNERRHDDRDRGDSYYGGDRRHDDYG) has biased composition (basic and acidic residues). Low complexity predominate over residues 521 to 533 (SAPAIPTAPAYPG). The span at 534-545 (AYGGYPGYGAPP) shows a compositional bias: gly residues. 2 stretches are compositionally biased toward pro residues: residues 550-563 (APPPGLPPPPPGAP) and 581-607 (APPPPPPAAEAPPPPPMDLPPPPPPGA).

The protein belongs to the BBP/SF1 family.

Its subcellular location is the nucleus. Its function is as follows. Necessary for the splicing of pre-mRNA. Has a role in the recognition of the branch site (5'-UACUAAC-3'), the pyrimidine tract and the 3'-splice site at the 3'-end of introns. The chain is Branchpoint-bridging protein (bbp-1) from Neurospora crassa (strain ATCC 24698 / 74-OR23-1A / CBS 708.71 / DSM 1257 / FGSC 987).